We begin with the raw amino-acid sequence, 157 residues long: Large ribosomal subunit protein uL15 (157 aa).

It belongs to the universal ribosomal protein uL15 family. As to quaternary structure, part of the 50S ribosomal subunit.

Functionally, binds to the 23S rRNA. The polypeptide is Large ribosomal subunit protein uL15 (Ehrlichia ruminantium (strain Gardel)).